Here is a 91-residue protein sequence, read N- to C-terminus: Lactococcin-B immunity protein (91 aa).

In terms of biological role, imparts immunity to lactococcin-B to naturally sensitive host strains. The chain is Lactococcin-B immunity protein (lciB) from Lactococcus lactis subsp. cremoris (Streptococcus cremoris).